The following is a 212-amino-acid chain: MERSDLPPDVVIRRLPLYARSLRYLLEEGVHSVSSQELGERINVTAAQIRKDLSYFGEFGKQGIGYDVEKLLQHIERILGLHHHWPVALVGIGLLGQAIARYEGFRTEGIEIVALFDSDPAKIGQKIGDLTIQDFAHVRRIIAEKQIKMAIIAVPAQQAQRVADVLVEAGIRAILSYAPMILQVPEDVWVRYIDPVAVLQSMTYYLAREQEH.

Positions 17-56 form a DNA-binding region, H-T-H motif; that stretch reads LYARSLRYLLEEGVHSVSSQELGERINVTAAQIRKDLSYF. 91–96 lines the NAD(+) pocket; it reads GIGLLG.

The protein belongs to the transcriptional regulatory Rex family. As to quaternary structure, homodimer.

It localises to the cytoplasm. Functionally, modulates transcription in response to changes in cellular NADH/NAD(+) redox state. This is Redox-sensing transcriptional repressor Rex from Chloroflexus aurantiacus (strain ATCC 29366 / DSM 635 / J-10-fl).